We begin with the raw amino-acid sequence, 291 residues long: uncharacterized protein (291 aa).

Positions 1 to 55 are disordered; sequence MRTHDIPRSPLVGHKKNAAPDGIGASRACCPARENEPFKKGSTNSRGGGVEWSRS. 2 helical membrane passes run 74–96 and 188–210; these read WWAV…PVHA and YYYL…RIRL.

It to T.pallidum TP_0733.

The protein resides in the cell membrane. This is an uncharacterized protein from Treponema pallidum (strain Nichols).